Here is a 362-residue protein sequence, read N- to C-terminus: G-prodeshotein coupled receptor 4 (362 aa).

Over methionine 1–glycine 8 the chain is Extracellular. N-linked (GlcNAc...) asparagine glycosylation is present at asparagine 3. The chain crosses the membrane as a helical span at residues cysteine 9–glutamine 45. Disulfide bonds link cysteine 9/cysteine 258 and cysteine 90/cysteine 168. Topologically, residues valine 46–arginine 49 are cytoplasmic. A helical transmembrane segment spans residues asparagine 50–histidine 80. Residues aspartate 81–histidine 85 are Extracellular-facing. Residues glycine 86–histidine 121 form a helical membrane-spanning segment. Residues proline 122 to arginine 129 lie on the Cytoplasmic side of the membrane. The helical transmembrane segment at arginine 130 to aspartate 156 threads the bilayer. Topologically, residues glutamate 157–phenylalanine 172 are extracellular. An extracellular loop 2 (ECL2) region spans residues glutamate 157–phenylalanine 172. Asparagine 164 is a glycosylation site (N-linked (GlcNAc...) asparagine). A helical transmembrane segment spans residues proline 173–glycine 210. Residues serine 211–threonine 214 lie on the Cytoplasmic side of the membrane. The chain crosses the membrane as a helical span at residues glutamate 215 to isoleucine 250. The Extracellular portion of the chain corresponds to tyrosine 251 to phenylalanine 260. Residues glutamate 261–valine 289 traverse the membrane as a helical segment. At asparagine 290–glutamine 362 the chain is on the cytoplasmic side. Positions alanine 335 to glutamine 362 are disordered.

This sequence belongs to the G-protein coupled receptor 1 family.

It localises to the cell membrane. Activated by a network of residues that connects an extracellular-facing cavity to Glu-145, a conserved charged residue buried in the transmembrane core of the receptor. Protonation likely drives conformational changes in extracellular loop 2 (ECL2), which stabilizes movement of transmembrane 3 (TM3) and a series of rearrangements that connect the extracellular-facing cavity to Glu-145, a residue only conserved in proton-sensing G-protein coupled receptors. Functionally, proton-sensing G-protein coupled receptor activated by extracellular pH, which is required to monitor pH changes and generate adaptive reactions. Activated by an optimal pH of 6.8-7.2. Ligand binding causes a conformation change that triggers signaling via guanine nucleotide-binding proteins (G proteins) and modulates the activity of downstream effectors, such as adenylate cyclase. GPR4 is mainly coupled to G(s) G proteins and mediates activation of adenylate cyclase activity. May also couple with G(q) and G(12)/G(13) G proteins. Acts as a key regulator of respiratory sensitivity to CO2/H(+) in brain retrotrapezoid nucleus neurons: acts by mediating detection of protons generated by the formation of carbonic acid in the blood, an important mechanism to impulse to breathe. Also acts as a regulator of acid secretion in the kidney collecting duct by maintaining acid-base homeostasis in the kidney. Acidosis-induced GPR4 activation increases paracellular gap formation and permeability of vascular endothelial cells, possibly through the G(12)/G(13)/Rho GTPase signaling pathway. In Homo sapiens (Human), this protein is G-prodeshotein coupled receptor 4.